Here is a 199-residue protein sequence, read N- to C-terminus: Histone deacetylase complex subunit SAP25 (199 aa).

2 stretches are compositionally biased toward polar residues: residues 151–163 (QMSQ…SSSA) and 184–199 (QGAD…THCP). Residues 151 to 199 (QMSQGEPRPSSSAVGPPDHTSDPPSPCGSPSSSQGADLSLPQTPDTHCP) form a disordered region.

In terms of assembly, may be a component of the mSIN3A corepressor complex. Interacts with SIN3A. Interacts with HDAC2.

It localises to the nucleus. It is found in the cytoplasm. In terms of biological role, involved in the transcriptional repression mediated by the mSIN3A but not the N-CoR corepressor complex. The sequence is that of Histone deacetylase complex subunit SAP25 (SAP25) from Homo sapiens (Human).